Reading from the N-terminus, the 269-residue chain is Tryptophan synthase alpha chain (269 aa).

Active-site proton acceptor residues include Glu-49 and Asp-60.

This sequence belongs to the TrpA family. Tetramer of two alpha and two beta chains.

It carries out the reaction (1S,2R)-1-C-(indol-3-yl)glycerol 3-phosphate + L-serine = D-glyceraldehyde 3-phosphate + L-tryptophan + H2O. The protein operates within amino-acid biosynthesis; L-tryptophan biosynthesis; L-tryptophan from chorismate: step 5/5. Functionally, the alpha subunit is responsible for the aldol cleavage of indoleglycerol phosphate to indole and glyceraldehyde 3-phosphate. The chain is Tryptophan synthase alpha chain from Actinobacillus succinogenes (strain ATCC 55618 / DSM 22257 / CCUG 43843 / 130Z).